A 95-amino-acid chain; its full sequence is MDNEEQKITLVDEHGNEELYNVLFTFDSEDYGRSYVLLYPSEAEADEEVDIQAYAFMPDENHDLGEGELIPIESDEEWDMVEEVLNTFLGDQDQD.

The protein belongs to the UPF0473 family.

This chain is UPF0473 protein PEPE_1260, found in Pediococcus pentosaceus (strain ATCC 25745 / CCUG 21536 / LMG 10740 / 183-1w).